The chain runs to 204 residues: 3-isopropylmalate dehydratase small subunit (204 aa).

Belongs to the LeuD family. LeuD type 1 subfamily. Heterodimer of LeuC and LeuD.

The enzyme catalyses (2R,3S)-3-isopropylmalate = (2S)-2-isopropylmalate. The protein operates within amino-acid biosynthesis; L-leucine biosynthesis; L-leucine from 3-methyl-2-oxobutanoate: step 2/4. Functionally, catalyzes the isomerization between 2-isopropylmalate and 3-isopropylmalate, via the formation of 2-isopropylmaleate. In Roseiflexus castenholzii (strain DSM 13941 / HLO8), this protein is 3-isopropylmalate dehydratase small subunit.